We begin with the raw amino-acid sequence, 213 residues long: Histidine biosynthesis bifunctional protein HisIE (213 aa).

A phosphoribosyl-AMP cyclohydrolase region spans residues Met1–Phe114. Residues Leu115–His213 form a phosphoribosyl-ATP pyrophosphohydrolase region.

The protein in the N-terminal section; belongs to the PRA-CH family. It in the C-terminal section; belongs to the PRA-PH family.

Its subcellular location is the cytoplasm. It catalyses the reaction 1-(5-phospho-beta-D-ribosyl)-ATP + H2O = 1-(5-phospho-beta-D-ribosyl)-5'-AMP + diphosphate + H(+). The enzyme catalyses 1-(5-phospho-beta-D-ribosyl)-5'-AMP + H2O = 1-(5-phospho-beta-D-ribosyl)-5-[(5-phospho-beta-D-ribosylamino)methylideneamino]imidazole-4-carboxamide. It functions in the pathway amino-acid biosynthesis; L-histidine biosynthesis; L-histidine from 5-phospho-alpha-D-ribose 1-diphosphate: step 2/9. Its pathway is amino-acid biosynthesis; L-histidine biosynthesis; L-histidine from 5-phospho-alpha-D-ribose 1-diphosphate: step 3/9. This Blochmanniella floridana protein is Histidine biosynthesis bifunctional protein HisIE.